We begin with the raw amino-acid sequence, 705 residues long: Elongation factor G (705 aa).

Residues Asn-8–Leu-294 enclose the tr-type G domain. GTP contacts are provided by residues Ala-17 to Thr-24, Asp-92 to His-96, and Asn-146 to Asp-149.

The protein belongs to the TRAFAC class translation factor GTPase superfamily. Classic translation factor GTPase family. EF-G/EF-2 subfamily.

It is found in the cytoplasm. Its function is as follows. Catalyzes the GTP-dependent ribosomal translocation step during translation elongation. During this step, the ribosome changes from the pre-translocational (PRE) to the post-translocational (POST) state as the newly formed A-site-bound peptidyl-tRNA and P-site-bound deacylated tRNA move to the P and E sites, respectively. Catalyzes the coordinated movement of the two tRNA molecules, the mRNA and conformational changes in the ribosome. This is Elongation factor G from Ruegeria pomeroyi (strain ATCC 700808 / DSM 15171 / DSS-3) (Silicibacter pomeroyi).